We begin with the raw amino-acid sequence, 74 residues long: Acyclotide phyb-K (74 aa).

The first 24 residues, 1 to 24, serve as a signal peptide directing secretion; it reads MARVNSLKCALCFIVLILFVQLNC. Residues 25-43 constitute a propeptide that is removed on maturation; it reads IPETRVMAVELSRVFLQTS. 3 disulfides stabilise this stretch: Cys47-Cys64, Cys51-Cys66, and Cys56-Cys71.

In terms of processing, contains 3 disulfide bonds. As to expression, expressed in midvein, lamina and periphery of leaves (at protein level).

Probably participates in a plant defense mechanism. The polypeptide is Acyclotide phyb-K (Petunia hybrida (Petunia)).